The chain runs to 179 residues: uncharacterized protein (179 aa).

A signal peptide spans 1–19 (MNTNVFRLLLLGSLFSLSA). The N-palmitoyl cysteine moiety is linked to residue C20. The S-diacylglycerol cysteine moiety is linked to residue C20.

It is found in the cell membrane. This is an uncharacterized protein from Escherichia coli (strain K12).